The following is a 56-amino-acid chain: Small ribosomal subunit protein uS14 (56 aa).

4 residues coordinate Zn(2+): Cys21, Cys24, Cys39, and Cys42.

This sequence belongs to the universal ribosomal protein uS14 family. Requires Zn(2+) as cofactor.

In Griffithsia japonica (Red alga), this protein is Small ribosomal subunit protein uS14 (RPS29).